A 288-amino-acid polypeptide reads, in one-letter code: Acetyl-coenzyme A carboxylase carboxyl transferase subunit beta (288 aa).

The CoA carboxyltransferase N-terminal domain maps to 34 to 288 (LFAKCPACKH…HLVAFHGGVS (255 aa)). Cysteine 38, cysteine 41, cysteine 56, and cysteine 59 together coordinate Zn(2+). A C4-type zinc finger spans residues 38-59 (CPACKHMIYQKDLGPAKICPTC).

The protein belongs to the AccD/PCCB family. Acetyl-CoA carboxylase is a heterohexamer composed of biotin carboxyl carrier protein (AccB), biotin carboxylase (AccC) and two subunits each of ACCase subunit alpha (AccA) and ACCase subunit beta (AccD). Requires Zn(2+) as cofactor.

The protein localises to the cytoplasm. It carries out the reaction N(6)-carboxybiotinyl-L-lysyl-[protein] + acetyl-CoA = N(6)-biotinyl-L-lysyl-[protein] + malonyl-CoA. It functions in the pathway lipid metabolism; malonyl-CoA biosynthesis; malonyl-CoA from acetyl-CoA: step 1/1. Its function is as follows. Component of the acetyl coenzyme A carboxylase (ACC) complex. Biotin carboxylase (BC) catalyzes the carboxylation of biotin on its carrier protein (BCCP) and then the CO(2) group is transferred by the transcarboxylase to acetyl-CoA to form malonyl-CoA. In Streptococcus equi subsp. equi (strain 4047), this protein is Acetyl-coenzyme A carboxylase carboxyl transferase subunit beta.